The following is a 271-amino-acid chain: Autophagy-related protein 5 (271 aa).

K145 is covalently cross-linked (Glycyl lysine isopeptide (Lys-Gly) (interchain with G-Cter in ATG12)).

This sequence belongs to the ATG5 family. Conjugated with ATG12. Interacts with ATG10. The ATG5-ATG12 conjugate forms a complex with several units of ATG16. The ATG12-ATG5 conjugate also associates with ATG3. Post-translationally, conjugated to ATG12; which is essential for autophagy. Conjugation with ATG12 involves ATG7 as an E1-like activating enzyme and ATG10 as an E2-like conjugating enzyme.

It localises to the preautophagosomal structure membrane. Functionally, involved in cytoplasm to vacuole transport (Cvt) and autophagic vesicle formation. Autophagy is essential for maintenance of amino acid levels and protein synthesis under nitrogen starvation. Required for selective autophagic degradation of the nucleus (nucleophagy). Also required for mitophagy, which eliminates defective or superfluous mitochondria in order to fulfill cellular energy requirements and prevent excess ROS production. Conjugation with ATG12, through a ubiquitin-like conjugating system involving ATG7 as an E1-like activating enzyme and ATG10 as an E2-like conjugating enzyme, is essential for its function. The ATG12-ATG5 conjugate acts as an E3-like enzyme which is required for lipidation of ATG8 and ATG8 association to the vesicle membranes. ATG12-ATG5 rearranges the ATG3 catalytic center and enhances its E2 activity. The sequence is that of Autophagy-related protein 5 from Kluyveromyces marxianus (strain DMKU3-1042 / BCC 29191 / NBRC 104275) (Yeast).